The primary structure comprises 132 residues: Ribonuclease P protein component 2 (132 aa).

It belongs to the eukaryotic/archaeal RNase P protein component 2 family. Consists of a catalytic RNA component and at least 4-5 protein subunits.

The protein resides in the cytoplasm. It carries out the reaction Endonucleolytic cleavage of RNA, removing 5'-extranucleotides from tRNA precursor.. Part of ribonuclease P, a protein complex that generates mature tRNA molecules by cleaving their 5'-ends. The sequence is that of Ribonuclease P protein component 2 from Methanosarcina acetivorans (strain ATCC 35395 / DSM 2834 / JCM 12185 / C2A).